Consider the following 646-residue polypeptide: 1-deoxy-D-xylulose-5-phosphate synthase (646 aa).

Residues H86 and 127-129 contribute to the thiamine diphosphate site; that span reads AHS. Residue D158 participates in Mg(2+) binding. Residues 159–160, N188, Y295, and E377 each bind thiamine diphosphate; that span reads GA. N188 is a binding site for Mg(2+).

Belongs to the transketolase family. DXPS subfamily. Homodimer. The cofactor is Mg(2+). Requires thiamine diphosphate as cofactor.

It catalyses the reaction D-glyceraldehyde 3-phosphate + pyruvate + H(+) = 1-deoxy-D-xylulose 5-phosphate + CO2. It participates in metabolic intermediate biosynthesis; 1-deoxy-D-xylulose 5-phosphate biosynthesis; 1-deoxy-D-xylulose 5-phosphate from D-glyceraldehyde 3-phosphate and pyruvate: step 1/1. Catalyzes the acyloin condensation reaction between C atoms 2 and 3 of pyruvate and glyceraldehyde 3-phosphate to yield 1-deoxy-D-xylulose-5-phosphate (DXP). The sequence is that of 1-deoxy-D-xylulose-5-phosphate synthase from Burkholderia ambifaria (strain ATCC BAA-244 / DSM 16087 / CCUG 44356 / LMG 19182 / AMMD) (Burkholderia cepacia (strain AMMD)).